A 991-amino-acid chain; its full sequence is Gingipain R1 (991 aa).

Positions 1-24 are cleaved as a signal peptide; sequence MKNLNKFVSIALCSSLLGGMAFAQ. Positions 25–227 are excised as a propeptide; it reads QTELGRNPNV…RMFMNYEPGR (203 aa). D305, V327, D330, Y332, E334, E388, and H393 together coordinate Ca(2+). Catalysis depends on H438, which acts as the Proton donor. The Nucleophile role is filled by C471. F476, E485, D519, E520, E523, and H529 together coordinate Ca(2+).

Belongs to the peptidase C25 family.

It localises to the secreted. It catalyses the reaction Hydrolysis of proteins and small molecule substrates, with a preference for Arg in P1.. Its activity is regulated as follows. Requires cysteine for activation and Ca(2+) and/or Mg(2+) for stabilization. It is stimulated by glycine-containing dipeptides. It is resistant to inhibition by proteinase inhibitors in human plasma. Functionally, thiol protease. Acts synergistically with RgpB to catalyze the maturation of fimbrial subunits, such as FimA. Its proteolytic activity is a major factor in both periodontal tissue destruction and in evasion of host defense mechanisms. This Porphyromonas gingivalis (Bacteroides gingivalis) protein is Gingipain R1 (rgpA).